A 336-amino-acid polypeptide reads, in one-letter code: 4-hydroxy-3-methylbut-2-enyl diphosphate reductase (336 aa).

The disordered stretch occupies residues 1–23; that stretch reads MFGQRLDTLGAMSSSVSSPSPET. C36 lines the [4Fe-4S] cluster pocket. (2E)-4-hydroxy-3-methylbut-2-enyl diphosphate-binding residues include H65 and H98. H65 and H98 together coordinate dimethylallyl diphosphate. Positions 65 and 98 each coordinate isopentenyl diphosphate. [4Fe-4S] cluster is bound at residue C120. A (2E)-4-hydroxy-3-methylbut-2-enyl diphosphate-binding site is contributed by H148. H148 is a binding site for dimethylallyl diphosphate. Residue H148 coordinates isopentenyl diphosphate. E150 serves as the catalytic Proton donor. T190 is a binding site for (2E)-4-hydroxy-3-methylbut-2-enyl diphosphate. C220 contributes to the [4Fe-4S] cluster binding site. The (2E)-4-hydroxy-3-methylbut-2-enyl diphosphate site is built by S248, S249, N250, and S293. Dimethylallyl diphosphate contacts are provided by S248, S249, N250, and S293. Isopentenyl diphosphate-binding residues include S248, S249, N250, and S293.

It belongs to the IspH family. It depends on [4Fe-4S] cluster as a cofactor.

It carries out the reaction isopentenyl diphosphate + 2 oxidized [2Fe-2S]-[ferredoxin] + H2O = (2E)-4-hydroxy-3-methylbut-2-enyl diphosphate + 2 reduced [2Fe-2S]-[ferredoxin] + 2 H(+). The catalysed reaction is dimethylallyl diphosphate + 2 oxidized [2Fe-2S]-[ferredoxin] + H2O = (2E)-4-hydroxy-3-methylbut-2-enyl diphosphate + 2 reduced [2Fe-2S]-[ferredoxin] + 2 H(+). Its pathway is isoprenoid biosynthesis; dimethylallyl diphosphate biosynthesis; dimethylallyl diphosphate from (2E)-4-hydroxy-3-methylbutenyl diphosphate: step 1/1. It participates in isoprenoid biosynthesis; isopentenyl diphosphate biosynthesis via DXP pathway; isopentenyl diphosphate from 1-deoxy-D-xylulose 5-phosphate: step 6/6. Catalyzes the conversion of 1-hydroxy-2-methyl-2-(E)-butenyl 4-diphosphate (HMBPP) into a mixture of isopentenyl diphosphate (IPP) and dimethylallyl diphosphate (DMAPP). Acts in the terminal step of the DOXP/MEP pathway for isoprenoid precursor biosynthesis. This chain is 4-hydroxy-3-methylbut-2-enyl diphosphate reductase, found in Corynebacterium efficiens (strain DSM 44549 / YS-314 / AJ 12310 / JCM 11189 / NBRC 100395).